A 94-amino-acid chain; its full sequence is UPF0235 protein TK0768 (94 aa).

It belongs to the UPF0235 family.

This is UPF0235 protein TK0768 from Thermococcus kodakarensis (strain ATCC BAA-918 / JCM 12380 / KOD1) (Pyrococcus kodakaraensis (strain KOD1)).